A 41-amino-acid chain; its full sequence is Alpha-1B-glycoprotein (41 aa).

Asn23 carries an N-linked (GlcNAc...) asparagine glycan.

As to quaternary structure, interacts with CRISP3. Post-translationally, glycosylated. In terms of tissue distribution, plasma.

Its subcellular location is the secreted. The chain is Alpha-1B-glycoprotein (A1BG) from Equus caballus (Horse).